An 872-amino-acid polypeptide reads, in one-letter code: Probable cation-transporting P-type ATPase (872 aa).

Residues 1-41 lie on the Cytoplasmic side of the membrane; it reads MNKWTGLSAAAVLESRAQHGANLIPTKKLTPFWLLFLEQFK. Residues 42-62 traverse the membrane as a helical segment; it reads SLVVILLLVATILSLVVAIIS. Over 63–79 the chain is Extracellular; it reads GVNANWLFDHNLVIEWT. The chain crosses the membrane as a helical span at residues 80–100; the sequence is QPFVILITVLANSLIGSIQEF. The Cytoplasmic portion of the chain corresponds to 101 to 237; that stretch reads KAQKSAHTLK…TKLSPLQQKL (137 aa). A helical membrane pass occupies residues 238 to 257; that stretch reads EKVGKWFSWFGLGLFVVVFL. Over 258–275 the chain is Extracellular; the sequence is VQLGLLGFHNFSANWSIA. A helical transmembrane segment spans residues 276–293; it reads LIGAIALVVAIIPEGLVT. At 294 to 642 the chain is on the cytoplasmic side; it reads FINVIFALSV…EQGRKTFLTC (349 aa). The active-site 4-aspartylphosphate intermediate is aspartate 331. Residues aspartate 587 and aspartate 591 each coordinate Mg(2+). Residues 643–662 form a helical membrane-spanning segment; that stretch reads KRVLFNLFLTSIAGTIVVLL. Residues 663–685 are Extracellular-facing; that stretch reads GLFVLGEVFREQLSKANHNFQVF. Residues 686-706 traverse the membrane as a helical segment; sequence TPTQLLIINLFVHGFPAVALA. The Cytoplasmic segment spans residues 707–724; the sequence is IQPVQEKLMLKPFSTKNL. A helical transmembrane segment spans residues 725–747; that stretch reads FYNRGGFDLIWQSLLLSFLTLLF. Residues 748 to 768 lie on the Extracellular side of the membrane; that stretch reads YSLGMVYAINDPELGKSGDLI. A helical transmembrane segment spans residues 769–788; the sequence is NRAGATCGFMVLGGSAALNS. Residues 789 to 801 lie on the Cytoplasmic side of the membrane; the sequence is LNLMVDRPLVATN. A helical transmembrane segment spans residues 802 to 824; the sequence is PKHYGIVWLGALSSIFVFLLIIF. The Extracellular segment spans residues 825-842; sequence INPLGLVFSTLKDLTAHP. A helical transmembrane segment spans residues 843–863; the sequence is VLIGYSFGGVLLYMTINEVVK. Residues 864-872 are Cytoplasmic-facing; sequence LIRLSYGSV.

It belongs to the cation transport ATPase (P-type) (TC 3.A.3) family. Type II subfamily.

The protein localises to the cell membrane. The catalysed reaction is ATP + H2O = ADP + phosphate + H(+). Could mediate calcium influx. This chain is Probable cation-transporting P-type ATPase (pacL), found in Mycoplasma pneumoniae (strain ATCC 29342 / M129 / Subtype 1) (Mycoplasmoides pneumoniae).